The chain runs to 303 residues: Glutamyl-Q tRNA(Asp) synthetase (303 aa).

L-glutamate contacts are provided by residues 16 to 20 and Glu-52; that span reads RFAPS. The 'HIGH' region motif lies at 19–29; that stretch reads PSPSGPLHFGS. 4 residues coordinate Zn(2+): Cys-108, Cys-110, Tyr-122, and Cys-126. Positions 177 and 195 each coordinate L-glutamate. Positions 233–237 match the 'KMSKS' region motif; it reads KLSKQ. Position 236 (Lys-236) interacts with ATP.

This sequence belongs to the class-I aminoacyl-tRNA synthetase family. GluQ subfamily. The cofactor is Zn(2+).

In terms of biological role, catalyzes the tRNA-independent activation of glutamate in presence of ATP and the subsequent transfer of glutamate onto a tRNA(Asp). Glutamate is transferred on the 2-amino-5-(4,5-dihydroxy-2-cyclopenten-1-yl) moiety of the queuosine in the wobble position of the QUC anticodon. This is Glutamyl-Q tRNA(Asp) synthetase from Vibrio vulnificus (strain YJ016).